A 494-amino-acid polypeptide reads, in one-letter code: Fumigaclavine B O-acetyltransferase easN (494 aa).

This sequence belongs to the fumigaclavine B O-acetyltransferase family. Monomer.

The enzyme catalyses fumigaclavine B + acetyl-CoA = fumigaclavine A + CoA. Its pathway is alkaloid biosynthesis; ergot alkaloid biosynthesis. In terms of biological role, fumigaclavine B O-acetyltransferase; part of the gene cluster that mediates the biosynthesis of fumiclavanine C, a fungal ergot alkaloid. DmaW catalyzes the first step of ergot alkaloid biosynthesis by condensing dimethylallyl diphosphate (DMAP) and tryptophan to form 4-dimethylallyl-L-tryptophan. The second step is catalyzed by the methyltransferase easF that methylates 4-dimethylallyl-L-tryptophan in the presence of S-adenosyl-L-methionine, resulting in the formation of 4-dimethylallyl-L-abrine. The catalase easC and the FAD-dependent oxidoreductase easE then transform 4-dimethylallyl-L-abrine to chanoclavine-I which is further oxidized by EasD in the presence of NAD(+), resulting in the formation of chanoclavine-I aldehyde. EasA reduces chanoclavine-I aldehyde to dihydrochanoclavine-I aldehyde that spontaneously dehydrates to form 6,8-dimethyl-6,7-didehydroergoline. EasG then catalyzes the reduction of 6,8-dimethyl-6,7-didehydroergoline to form festuclavine. Hydrolysis of festuclavine by easM then leads to the formation of fumigaclavine B which is in turn acetylated by easN to fumigaclavine A. Finally, easL catalyzes the conversion of fumigaclavine A into fumigaclavine C by attaching a dimethylallyl moiety to C-2 of the indole nucleus. The protein is Fumigaclavine B O-acetyltransferase easN of Aspergillus fumigatus (strain ATCC MYA-4609 / CBS 101355 / FGSC A1100 / Af293) (Neosartorya fumigata).